The primary structure comprises 565 residues: Thiol:disulfide interchange protein DsbD (565 aa).

A signal peptide spans 1–19 (MAQRIFTLILLLCSTSVFA). 2 disulfide bridges follow: Cys-122/Cys-128 and Cys-182/Cys-304. A run of 7 helical transmembrane segments spans residues 163–183 (LPFS…TPCV), 208–228 (LLTF…GLVV), 243–263 (YVLI…FGLF), 289–309 (GVFI…TAPL), 323–343 (WLGG…LMLI), 357–377 (WMEQ…VFLL), and 384–404 (IWGL…AFIT). Positions 434-565 (WAFGETHTAQ…FSAHLRDRQP (132 aa)) constitute a Thioredoxin domain. An intrachain disulfide couples Cys-480 to Cys-483.

It belongs to the thioredoxin family. DsbD subfamily.

Its subcellular location is the cell inner membrane. It carries out the reaction [protein]-dithiol + NAD(+) = [protein]-disulfide + NADH + H(+). It catalyses the reaction [protein]-dithiol + NADP(+) = [protein]-disulfide + NADPH + H(+). Required to facilitate the formation of correct disulfide bonds in some periplasmic proteins and for the assembly of the periplasmic c-type cytochromes. Acts by transferring electrons from cytoplasmic thioredoxin to the periplasm. This transfer involves a cascade of disulfide bond formation and reduction steps. The polypeptide is Thiol:disulfide interchange protein DsbD (Escherichia coli O6:K15:H31 (strain 536 / UPEC)).